Here is a 772-residue protein sequence, read N- to C-terminus: MDINSNASVSPRPDGLPMTAGYNSASGKVRNSIRSIINHPEDSARAKERSETNSPKNNGNKKPRKKRKTFSCDTCRRVKTRCDFEPFIGKCYRCNVLQLDCSLARNKDNEILNTLREDGLLKKINSINHNLGSFSHLNADSPNESQSSFEKNGTVNFDNYMIDKRLSSLEEHIKSLHQKMDLIITTAKMSYNSDIKGPGDDIQNVDFSSNKTYDSRLTSGSETIRKTGEYRKENLFLNGFKLKESPLKLLHDIDERLFPSKATSKAAKLAGQQRPYAVARVNFLHFYENNQELCHKLAKEFLVRSHFWIIPGGRKEIDVEYAHSHLFITSVFTIIAMSFADNDKYAAEQEILYPLVERLLTNTLTMFEKLTAFDIEAILYCCMFHISRKAKRYRQLKFNSLVLSNFALNSLLHVIDFYQIKDRVLVKEVYNPEDLYHLRILNSLTACYLEYSISYGDIREQDDMLKEFNKLVAKFPQANFGDDIKISEINLGDIVNGIFINLKNYFAQCLDDFNNDRYGGNADTFIFVFPELNYWLKNWEELLAKDGAGVLLFTFDFYHIMICRTFITEFSSTLKSNQRFLKLILNTMKEHSFSLLNGFLRLPPTLIRGAPIFTCHQLVYACLTLCDYLYWFDSSERQRVLSLCTKVYWHLSTIGEKMNEATDNVGKIIKSIIDTSKTRINFGSLSKENSDNDKMSTNANNYTGAGNLHAAKPATSPTNVGTLHENLSSSHFMIPDVDQFNSFEDFFQDFFDSLKPNSQKMFTSDKKTEQTT.

A disordered region spans residues 1–70; it reads MDINSNASVS…KKPRKKRKTF (70 aa). Positions 39-51 are enriched in basic and acidic residues; the sequence is HPEDSARAKERSE. Residues 59 to 69 are compositionally biased toward basic residues; it reads GNKKPRKKRKT. A DNA-binding region (zn(2)-C6 fungal-type) is located at residues 72–101; the sequence is CDTCRRVKTRCDFEPFIGKCYRCNVLQLDC.

Belongs to the URC2 family.

Its subcellular location is the cytoplasm. It is found in the nucleus. Probable transcriptional activator involved in uracil catabolism. The protein is Uracil catabolism protein 2 (URC2) of Saccharomyces cerevisiae (strain ATCC 204508 / S288c) (Baker's yeast).